The sequence spans 113 residues: Class I hydrophobin fvh1 (113 aa).

The signal sequence occupies residues 1–20 (MVSFRAFTVAASLFATLAAA). 4 cysteine pairs are disulfide-bonded: Cys34-Cys94, Cys41-Cys88, Cys42-Cys75, and Cys95-Cys108. The N-linked (GlcNAc...) asparagine glycan is linked to Asn35. The N-linked (GlcNAc...) asparagine glycan is linked to Asn97.

It belongs to the fungal hydrophobin family. Self-assembles to form functional amyloid fibrils called rodlets. Self-assembly into fibrillar rodlets occurs spontaneously at hydrophobic:hydrophilic interfaces and the rodlets further associate laterally to form amphipathic monolayers.

The protein resides in the secreted. The protein localises to the cell wall. Aerial growth, conidiation, and dispersal of filamentous fungi in the environment rely upon a capability of their secreting small amphipathic proteins called hydrophobins (HPBs) with low sequence identity. Class I can self-assemble into an outermost layer of rodlet bundles on aerial cell surfaces, conferring cellular hydrophobicity that supports fungal growth, development and dispersal; whereas Class II form highly ordered films at water-air interfaces through intermolecular interactions but contribute nothing to the rodlet structure. Fvh1 is a class I hydrophobin involved in fruiting body initiation. This is Class I hydrophobin fvh1 from Flammulina velutipes (Agaricus velutipes).